The following is a 138-amino-acid chain: Bis(5'-nucleosyl)-tetraphosphatase [asymmetrical] (138 aa).

The region spanning 1–132 is the Nudix hydrolase domain; it reads MVVKAAGLVI…EMGSLLRKFS (132 aa). The short motif at 37–58 is the Nudix box element; sequence GHVDPGEDEWQAAIRETKEEAN.

This sequence belongs to the Nudix hydrolase family. As to quaternary structure, monomer. The cofactor is Mg(2+). Requires Co(2+) as cofactor. Mn(2+) serves as cofactor. It depends on Zn(2+) as a cofactor. Ca(2+) is required as a cofactor.

The enzyme catalyses P(1),P(4)-bis(5'-adenosyl) tetraphosphate + H2O = AMP + ATP + 2 H(+). Its function is as follows. Asymmetrically hydrolyzes Ap4A to yield AMP and ATP. The protein is Bis(5'-nucleosyl)-tetraphosphatase [asymmetrical] (ndx-4) of Caenorhabditis elegans.